A 157-amino-acid polypeptide reads, in one-letter code: 17.8 kDa class I heat shock protein (157 aa).

The 116-residue stretch at 41–156 (ETSAITNARV…KAQVKSIDIS (116 aa)) folds into the sHSP domain.

It belongs to the small heat shock protein (HSP20) family. In terms of assembly, homodimer under normal physiological conditions. Aggregates in high oligomeric complexes after heat shock. Binds to AKR2A and to chloroplasts. As to expression, expressed ubiquitously at low levels under normal physiological conditions.

The protein resides in the cytoplasm. Its function is as follows. Cytosolic mediator for sorting and targeting of nascent chloroplast outer envelope membrane (OEM) proteins to the chloroplast. Functions as an AKR2A cofactor to facilitate the targeting of OEP7 to chloroplasts. The polypeptide is 17.8 kDa class I heat shock protein (HSP17.8) (Arabidopsis thaliana (Mouse-ear cress)).